The sequence spans 248 residues: Ribosomal RNA small subunit methyltransferase J (248 aa).

S-adenosyl-L-methionine contacts are provided by residues Arg98 to Asp99, Glu114 to Arg115, Ser150 to Ser151, and Asp168.

This sequence belongs to the methyltransferase superfamily. RsmJ family.

The protein localises to the cytoplasm. The enzyme catalyses guanosine(1516) in 16S rRNA + S-adenosyl-L-methionine = N(2)-methylguanosine(1516) in 16S rRNA + S-adenosyl-L-homocysteine + H(+). Specifically methylates the guanosine in position 1516 of 16S rRNA. This is Ribosomal RNA small subunit methyltransferase J from Shewanella baltica (strain OS195).